We begin with the raw amino-acid sequence, 340 residues long: 4-amino-5-hydroxymethyl-2-methylpyrimidine phosphate synthase THI11 (340 aa).

Lysine 62 is modified (N6-(pyridoxal phosphate)lysine). Residue histidine 66 is part of the active site. 115–118 (GEFG) provides a ligand contact to pyridoxal 5'-phosphate. The CCCFC; essential for catalytic activity, may be the site of iron coordination motif lies at 195–199 (CCCFC).

This sequence belongs to the NMT1/THI5 family. In terms of assembly, homodimer. The cofactor is Fe cation.

The enzyme catalyses N(6)-(pyridoxal phosphate)-L-lysyl-[4-amino-5-hydroxymethyl-2-methylpyrimidine phosphate synthase] + L-histidyl-[4-amino-5-hydroxymethyl-2-methylpyrimidine phosphate synthase] + 2 Fe(3+) + 4 H2O = L-lysyl-[4-amino-5-hydroxymethyl-2-methylpyrimidine phosphate synthase] + (2S)-2-amino-5-hydroxy-4-oxopentanoyl-[4-amino-5-hydroxymethyl-2-methylpyrimidine phosphate synthase] + 4-amino-2-methyl-5-(phosphooxymethyl)pyrimidine + 3-oxopropanoate + 2 Fe(2+) + 2 H(+). Its pathway is cofactor biosynthesis; thiamine diphosphate biosynthesis. Functionally, responsible for the formation of the pyrimidine heterocycle in the thiamine biosynthesis pathway. Catalyzes the formation of hydroxymethylpyrimidine phosphate (HMP-P) from histidine and pyridoxal phosphate (PLP). The protein uses PLP and the active site histidine to form HMP-P, generating an inactive enzyme. The enzyme can only undergo a single turnover, which suggests it is a suicide enzyme. In Saccharomyces cerevisiae (strain ATCC 204508 / S288c) (Baker's yeast), this protein is 4-amino-5-hydroxymethyl-2-methylpyrimidine phosphate synthase THI11.